A 172-amino-acid polypeptide reads, in one-letter code: Protein-export protein SecB (172 aa).

It belongs to the SecB family. Homotetramer, a dimer of dimers. One homotetramer interacts with 1 SecA dimer.

It is found in the cytoplasm. In terms of biological role, one of the proteins required for the normal export of preproteins out of the cell cytoplasm. It is a molecular chaperone that binds to a subset of precursor proteins, maintaining them in a translocation-competent state. It also specifically binds to its receptor SecA. This Haemophilus ducreyi (strain 35000HP / ATCC 700724) protein is Protein-export protein SecB.